Reading from the N-terminus, the 544-residue chain is Chaperonin GroEL (544 aa).

Residues 29–32 (TLGP), 86–90 (DGTTT), Gly-413, 476–478 (NAA), and Asp-492 each bind ATP.

The protein belongs to the chaperonin (HSP60) family. In terms of assembly, forms a cylinder of 14 subunits composed of two heptameric rings stacked back-to-back. Interacts with the co-chaperonin GroES.

It localises to the cytoplasm. It carries out the reaction ATP + H2O + a folded polypeptide = ADP + phosphate + an unfolded polypeptide.. In terms of biological role, together with its co-chaperonin GroES, plays an essential role in assisting protein folding. The GroEL-GroES system forms a nano-cage that allows encapsulation of the non-native substrate proteins and provides a physical environment optimized to promote and accelerate protein folding. The sequence is that of Chaperonin GroEL from Bacillus pumilus (strain SAFR-032).